We begin with the raw amino-acid sequence, 100 residues long: Urease subunit gamma (100 aa).

This sequence belongs to the urease gamma subunit family. Heterotrimer of UreA (gamma), UreB (beta) and UreC (alpha) subunits. Three heterotrimers associate to form the active enzyme.

It is found in the cytoplasm. It carries out the reaction urea + 2 H2O + H(+) = hydrogencarbonate + 2 NH4(+). It functions in the pathway nitrogen metabolism; urea degradation; CO(2) and NH(3) from urea (urease route): step 1/1. The chain is Urease subunit gamma from Pseudarthrobacter chlorophenolicus (strain ATCC 700700 / DSM 12829 / CIP 107037 / JCM 12360 / KCTC 9906 / NCIMB 13794 / A6) (Arthrobacter chlorophenolicus).